A 560-amino-acid polypeptide reads, in one-letter code: MFS-type transporter pgmG (560 aa).

The disordered stretch occupies residues 1–32 (MSETVTQTETDQRPATARSLGAEEKEAKSDEQ). Positions 21-31 (GAEEKEAKSDE) are enriched in basic and acidic residues. 8 helical membrane-spanning segments follow: residues 45–65 (FIVI…NTIV), 84–104 (WLSV…SKIY), 111–131 (WLYL…GAAP), 141–161 (ALAG…LSVN), 174–194 (TGLT…GFAV), 201–221 (WSFY…LFML), 242–262 (LGTI…NFGG), and 275–295 (CFVV…YCIG). N300 carries N-linked (GlcNAc...) asparagine glycosylation. The helical transmembrane segment at 313-333 (FIILFVQTASVATVFFVPIYF) threads the bilayer. Residue N343 is glycosylated (N-linked (GlcNAc...) asparagine). The next 5 membrane-spanning stretches (helical) occupy residues 346–366 (AIDA…AMIL), 378–398 (MPWY…MYTI), 409–429 (GYMI…FAVA), 440–460 (VATG…LAIA), and 515–535 (ISQV…LAIF).

The protein belongs to the major facilitator superfamily. TCR/Tet family.

The protein resides in the membrane. Functionally, MFS-type transporter; part of the gene cluster that mediates the biosynthesis of pleosporalin A, ascomycone A, as well as a third cryptic naphthoquinone derived pigment, all responsible for the coloration of conidia. Seems not to be involved in pigment biosynthesis although its expression is regulated by the cluster-specific transcription factor pgmR. The sequence is that of MFS-type transporter pgmG from Aspergillus terreus.